The primary structure comprises 369 residues: MAAKKNSKSQPATGDNRQKALDAALAMIEKDFGKGAVMRLGDDNRPPISAISSGNTAIDVALGIGGFPKGRIVEVYGPESSGKTTVALHAIAQAQRAGGIAAFIDAEHALDPDYARKLGVDTDALLVSQPDTGEQALEIADMLVRSGAIDIIVIDSVAALTPKAEIEGEMGDSHVGLQARLMSQALRKMTGALYNSGTTAIFINQLREKIGVMFGSPETTTGGKALKFYASVRCDVRRIQTLKDGQDAIGNRTRLKVVKNKVSPPFKIAEFDIMYGEGISRESSIIDLGVDNGIIKKSGSWFTYDGDQLGQGKEKVRLYLKQTPELADEIEEKIFRALQIGKYANQNDALTDDPVDMVPNIDFDDEDNG.

Residue 77–84 (GPESSGKT) coordinates ATP.

It belongs to the RecA family.

The protein localises to the cytoplasm. In terms of biological role, can catalyze the hydrolysis of ATP in the presence of single-stranded DNA, the ATP-dependent uptake of single-stranded DNA by duplex DNA, and the ATP-dependent hybridization of homologous single-stranded DNAs. It interacts with LexA causing its activation and leading to its autocatalytic cleavage. The polypeptide is Protein RecA (Corynebacterium pseudotuberculosis (strain C231)).